The primary structure comprises 257 residues: ADP-dependent (S)-NAD(P)H-hydrate dehydratase (257 aa).

The YjeF C-terminal domain maps to 1–257 (MGRLQRTLSN…VIERIPDTIR (257 aa)). Gly-200 provides a ligand contact to AMP. Asp-201 lines the (6S)-NADPHX pocket.

The protein belongs to the NnrD/CARKD family. Homotetramer. Requires Mg(2+) as cofactor.

It carries out the reaction (6S)-NADHX + ADP = AMP + phosphate + NADH + H(+). The enzyme catalyses (6S)-NADPHX + ADP = AMP + phosphate + NADPH + H(+). Catalyzes the dehydration of the S-form of NAD(P)HX at the expense of ADP, which is converted to AMP. Together with NAD(P)HX epimerase, which catalyzes the epimerization of the S- and R-forms, the enzyme allows the repair of both epimers of NAD(P)HX, a damaged form of NAD(P)H that is a result of enzymatic or heat-dependent hydration. The sequence is that of ADP-dependent (S)-NAD(P)H-hydrate dehydratase from Haloterrigena turkmenica (strain ATCC 51198 / DSM 5511 / JCM 9101 / NCIMB 13204 / VKM B-1734 / 4k) (Halococcus turkmenicus).